A 210-amino-acid polypeptide reads, in one-letter code: Putative 3-methyladenine DNA glycosylase (210 aa).

It belongs to the DNA glycosylase MPG family.

This Lactobacillus helveticus (strain DPC 4571) protein is Putative 3-methyladenine DNA glycosylase.